A 130-amino-acid chain; its full sequence is Lysozyme C (130 aa).

A C-type lysozyme domain is found at 1–130 (KVWERCALAR…VEQYVEGCDL (130 aa)). 4 disulfides stabilise this stretch: Cys6–Cys128, Cys30–Cys116, Cys65–Cys81, and Cys77–Cys95. Active-site residues include Glu35 and Asp53.

The protein belongs to the glycosyl hydrolase 22 family. As to quaternary structure, monomer.

It carries out the reaction Hydrolysis of (1-&gt;4)-beta-linkages between N-acetylmuramic acid and N-acetyl-D-glucosamine residues in a peptidoglycan and between N-acetyl-D-glucosamine residues in chitodextrins.. Functionally, lysozymes have primarily a bacteriolytic function; those in tissues and body fluids are associated with the monocyte-macrophage system and enhance the activity of immunoagents. The sequence is that of Lysozyme C (LYZ) from Camelus dromedarius (Dromedary).